A 105-amino-acid chain; its full sequence is Large ribosomal subunit protein uL24 (105 aa).

This sequence belongs to the universal ribosomal protein uL24 family. Part of the 50S ribosomal subunit.

One of two assembly initiator proteins, it binds directly to the 5'-end of the 23S rRNA, where it nucleates assembly of the 50S subunit. Functionally, one of the proteins that surrounds the polypeptide exit tunnel on the outside of the subunit. The sequence is that of Large ribosomal subunit protein uL24 from Psychrobacter arcticus (strain DSM 17307 / VKM B-2377 / 273-4).